A 480-amino-acid chain; its full sequence is Argininosuccinate lyase (480 aa).

A disordered region spans residues 1–20; that stretch reads MTQQDGGQAGQAEPTKLWGG.

Belongs to the lyase 1 family. Argininosuccinate lyase subfamily.

It is found in the cytoplasm. It catalyses the reaction 2-(N(omega)-L-arginino)succinate = fumarate + L-arginine. The protein operates within amino-acid biosynthesis; L-arginine biosynthesis; L-arginine from L-ornithine and carbamoyl phosphate: step 3/3. This is Argininosuccinate lyase from Saccharopolyspora erythraea (strain ATCC 11635 / DSM 40517 / JCM 4748 / NBRC 13426 / NCIMB 8594 / NRRL 2338).